The following is a 372-amino-acid chain: tRNA-specific 2-thiouridylase MnmA (372 aa).

Residues 16–23 and methionine 42 contribute to the ATP site; that span reads GMSGGVDS. An interaction with target base in tRNA region spans residues 102–104; sequence NPD. Cysteine 107 serves as the catalytic Nucleophile. A disulfide bridge connects residues cysteine 107 and cysteine 205. Glycine 132 is a binding site for ATP. The interval 155-157 is interaction with tRNA; that stretch reads KDQ. The active-site Cysteine persulfide intermediate is cysteine 205. An interaction with tRNA region spans residues 317 to 318; the sequence is RY.

The protein belongs to the MnmA/TRMU family.

The protein localises to the cytoplasm. It catalyses the reaction S-sulfanyl-L-cysteinyl-[protein] + uridine(34) in tRNA + AH2 + ATP = 2-thiouridine(34) in tRNA + L-cysteinyl-[protein] + A + AMP + diphosphate + H(+). Catalyzes the 2-thiolation of uridine at the wobble position (U34) of tRNA, leading to the formation of s(2)U34. This Shewanella sp. (strain MR-7) protein is tRNA-specific 2-thiouridylase MnmA.